A 107-amino-acid polypeptide reads, in one-letter code: UPF0060 membrane protein RPD_3084 (107 aa).

Transmembrane regions (helical) follow at residues 5–25, 31–51, 59–79, and 85–105; these read IIYV…WGWL, VWWL…LTLV, AYAS…WSVE, and RWDV…LWGP.

It belongs to the UPF0060 family.

It is found in the cell inner membrane. The sequence is that of UPF0060 membrane protein RPD_3084 from Rhodopseudomonas palustris (strain BisB5).